An 830-amino-acid polypeptide reads, in one-letter code: MAKFKRTDTNRSLENLLDQDKSAQMSKNGGSLAKQPTRKLIPGHGLEFNNLSYSVIKKVKKDGVWINKEAYLLNDISGQALRGEIMAIMGPSGAGKSTFLDALAGRIARGSLEGTVRIDGKPVTTSYMKMISSYVMQDDQLFPMLTVFETFMFAAEVRLPPSISRAEKKKRVHELLEQLGLTSATHTYIGDEGRRGVSGGERRRVSIGIDIIHKPSLLFLDEPTSGLDSTSAFSVVEKVKDIAKSGSIVLMTIHQPSFRIQMLLDRITVLARGRLVYLGSPTGVAAFLAGFARPVPDGENSLEYLLDVIKEYDESTVGLDPLVLYQRDGIKPDQAAKTPVRKPPKTPKIPRTPYAKSPWTKHISLKSSHFSTGNMNSQRDPKDHSDQQSDVNNFDYEDDDDEDEFDKSLERRAPHTPMSMQSGVYPRLASHFYKDFSVWLYNGVKGTPRRPPTWNNNGAIKAPISGSGFKSMSSSQFSMTQQTPGPGNKTPIFTPGRDVIEYSSYNPSYEEVFEIEEVLDEPVHRHKFANPWVREVLVLSWRTTLNVIRTPELFLSREIVLTVMGLVLSSFFKKLSHFDFKTINHLLNFYIFTICLVFFSSNDAVPTFIQERFIFIRETSHNAYRASSYVISSLIVYLPFFAIQGFTFAGITQYILHLNSSILSFWLILYSSLVTSNAYVMLVSALVPSYITGYAVVIATTALFFLTCGFFLKRTQIPLVWRWLHYISAIKYPFEALLINEFKGSKHCYDGDLSDLSPGPLGDVKFSALRNNSRAALPQNCTLIGEDVLFSMDIREENIWLDIVILLAWGVLYRLFFYVVLRFYSKNERK.

Over methionine 1 to proline 551 the chain is Cytoplasmic. The region spanning leucine 46–aspartate 297 is the ABC transporter domain. Residue glycine 90–serine 97 coordinates ATP. Disordered stretches follow at residues aspartate 333 to lysine 356, serine 368 to serine 422, and serine 471 to proline 491. Polar residues predominate over residues serine 368–glutamine 378. The span at aspartate 395–phenylalanine 405 shows a compositional bias: acidic residues. Residues serine 471–threonine 483 show a composition bias toward low complexity. Residues glutamate 552–phenylalanine 572 form a helical membrane-spanning segment. The Extracellular segment spans residues lysine 573–asparagine 588. Residues phenylalanine 589–isoleucine 609 form a helical membrane-spanning segment. Residues glutamine 610 to valine 630 lie on the Cytoplasmic side of the membrane. A helical membrane pass occupies residues isoleucine 631–isoleucine 651. At threonine 652 to serine 661 the chain is on the extracellular side. An N-linked (GlcNAc...) asparagine glycan is attached at asparagine 659. The chain crosses the membrane as a helical span at residues isoleucine 662–leucine 682. Over valine 683–tyrosine 690 the chain is Cytoplasmic. The chain crosses the membrane as a helical span at residues isoleucine 691–phenylalanine 711. The Extracellular portion of the chain corresponds to leucine 712–asparagine 798. N-linked (GlcNAc...) asparagine glycosylation is found at asparagine 771 and asparagine 780. The helical transmembrane segment at isoleucine 799–valine 819 threads the bilayer. Residues valine 820–lysine 830 lie on the Cytoplasmic side of the membrane.

This sequence belongs to the ABC transporter superfamily. ABCG family. Stunted arbuscule (STR) subfamily. As to quaternary structure, heterodimerizes with STR2; the resulting transporter is located in the peri-arbuscular membrane.

The protein resides in the cell membrane. Functionally, together with STR2, required for arbuscule development in arbuscular mycorrhizal (AM) symbiosis. This chain is ABC transporter G family member STR, found in Petunia hybrida (Petunia).